The chain runs to 297 residues: ATP phosphoribosyltransferase (297 aa).

The protein belongs to the ATP phosphoribosyltransferase family.

It is found in the cytoplasm. It carries out the reaction 1-(5-phospho-beta-D-ribosyl)-ATP + diphosphate = 5-phospho-alpha-D-ribose 1-diphosphate + ATP. It functions in the pathway amino-acid biosynthesis; L-histidine biosynthesis; L-histidine from 5-phospho-alpha-D-ribose 1-diphosphate: step 1/9. Its function is as follows. Catalyzes the condensation of ATP and 5-phosphoribose 1-diphosphate to form N'-(5'-phosphoribosyl)-ATP (PR-ATP). Has a crucial role in the pathway because the rate of histidine biosynthesis seems to be controlled primarily by regulation of the enzymatic activity. The sequence is that of ATP phosphoribosyltransferase (HIS1) from Eremothecium gossypii (strain ATCC 10895 / CBS 109.51 / FGSC 9923 / NRRL Y-1056) (Yeast).